The sequence spans 234 residues: Thioredoxin-dependent peroxide reductase, mitochondrial (234 aa).

A mitochondrion-targeting transit peptide spans 1 to 30 (MSFVARSLIRNVPLMGKAILSQQKQIAARL). One can recognise a Thioredoxin domain in the interval 40-198 (VRVQQPAPDF…VLRLIKAFQF (159 aa)). Cys85 serves as the catalytic Cysteine sulfenic acid (-SOH) intermediate.

This sequence belongs to the peroxiredoxin family. AhpC/Prx1 subfamily. In terms of assembly, homodimer; disulfide-linked, upon oxidation. 6 homodimers assemble to form a ring-like dodecamer. Also exists as a monomer, however the monomeric form is present at a much lower level than the homodimeric form. As to expression, expressed in thoracic flight muscles (at protein level). Detected in the head and body (at protein level).

It localises to the mitochondrion. The catalysed reaction is a hydroperoxide + [thioredoxin]-dithiol = an alcohol + [thioredoxin]-disulfide + H2O. In terms of biological role, thiol-specific peroxidase that catalyzes the reduction of hydrogen peroxide and organic hydroperoxides to water and alcohols, respectively. Plays a role in cell protection against oxidative stress by detoxifying peroxides. May be involved in aging-associated changes in the responsiveness to oxidative stress. Involved in the maintenance of global thiol redox homeostasis. Functions in the central nervous system (CNS) and in motor neurons and is essential for normal motor function. The sequence is that of Thioredoxin-dependent peroxide reductase, mitochondrial from Drosophila melanogaster (Fruit fly).